The following is a 134-amino-acid chain: Small ribosomal subunit protein bS6 (134 aa).

A compositionally biased stretch (basic and acidic residues) spans 113–122 (NKDIKEKEQP). Residues 113 to 134 (NKDIKEKEQPSESNVDADLKVN) are disordered.

The protein belongs to the bacterial ribosomal protein bS6 family.

In terms of biological role, binds together with bS18 to 16S ribosomal RNA. The protein is Small ribosomal subunit protein bS6 of Borrelia recurrentis (strain A1).